Reading from the N-terminus, the 553-residue chain is uncharacterized protein (553 aa).

In terms of domain architecture, SWIB/MDM2 spans R26–E109. Residues A150–T275 form the Plus3 domain. Disordered stretches follow at residues Q335–P357 and P447–D482. Positions E343–L353 are enriched in basic and acidic residues. Over residues P447 to P461 the composition is skewed to polar residues. Over residues E466 to T480 the composition is skewed to acidic residues. The region spanning K497–R551 is the GYF domain.

This is an uncharacterized protein from Arabidopsis thaliana (Mouse-ear cress).